The primary structure comprises 421 residues: Histidine--tRNA ligase (421 aa).

Belongs to the class-II aminoacyl-tRNA synthetase family. Homodimer.

The protein resides in the cytoplasm. The enzyme catalyses tRNA(His) + L-histidine + ATP = L-histidyl-tRNA(His) + AMP + diphosphate + H(+). The polypeptide is Histidine--tRNA ligase (Francisella tularensis subsp. novicida (strain U112)).